The primary structure comprises 263 residues: uncharacterized protein (263 aa).

17-41 provides a ligand contact to NAD(+); that stretch reads GGGRGLGAAIALAFAQAGADVLIAS. Substrate is bound at residue S147. The Proton acceptor role is filled by Y160. An NAD(+)-binding site is contributed by K164.

This sequence belongs to the short-chain dehydrogenases/reductases (SDR) family.

This is an uncharacterized protein from Mycobacterium tuberculosis (strain CDC 1551 / Oshkosh).